The sequence spans 232 residues: MPNGKPDPASLSDRQRRILEVIRDAVVLRGYPPSIREIGDAAGLQSTSSVAYQLKELEKKGFLRRDPNKPRAVDVRHLPETESRSSKAATQAKSKAPQAGVHDPELAGQTSFVPVVGKIAAGSPITAEQNIEEYYPLPAEIVGDGDLFMLQVVGESMRDAGILTGDWVVVRSQPVAEQGEFVAAMIDGEATVKEFHKDSSGIWLLPHNDTFAPIPAENAEIMGKVVSVMRKL.

A DNA-binding region (H-T-H motif) is located at residues 35–55 (IREIGDAAGLQSTSSVAYQLK). The segment covering 61–85 (GFLRRDPNKPRAVDVRHLPETESRS) has biased composition (basic and acidic residues). The tract at residues 61-104 (GFLRRDPNKPRAVDVRHLPETESRSSKAATQAKSKAPQAGVHDP) is disordered. The segment covering 86 to 99 (SKAATQAKSKAPQA) has biased composition (low complexity). Residues serine 156 and lysine 193 each act as for autocatalytic cleavage activity in the active site.

This sequence belongs to the peptidase S24 family. In terms of assembly, homodimer.

The enzyme catalyses Hydrolysis of Ala-|-Gly bond in repressor LexA.. In terms of biological role, represses a number of genes involved in the response to DNA damage (SOS response), including recA and lexA. In the presence of single-stranded DNA, RecA interacts with LexA causing an autocatalytic cleavage which disrupts the DNA-binding part of LexA, leading to derepression of the SOS regulon and eventually DNA repair. This is LexA repressor from Corynebacterium glutamicum (strain ATCC 13032 / DSM 20300 / JCM 1318 / BCRC 11384 / CCUG 27702 / LMG 3730 / NBRC 12168 / NCIMB 10025 / NRRL B-2784 / 534).